The sequence spans 211 residues: Transcriptional regulator GfcR (211 aa).

It belongs to the purine/pyrimidine phosphoribosyltransferase family. GfcR subfamily.

This Methanocaldococcus jannaschii (strain ATCC 43067 / DSM 2661 / JAL-1 / JCM 10045 / NBRC 100440) (Methanococcus jannaschii) protein is Transcriptional regulator GfcR.